Reading from the N-terminus, the 374-residue chain is 4-hydroxybenzoate polyprenyltransferase, mitochondrial (374 aa).

Residues 1–34 constitute a mitochondrion transit peptide; it reads MLRWGGAGLARGLRAVRSAWLRGPRGLPLALVRS. Residues 35–83 lie on the Mitochondrial matrix side of the membrane; it reads AGVPGARDRRAPAPGTQRGRALSLSAAAVVNSAPRPLQPYLRLMRLDKP. A helical membrane pass occupies residues 84 to 104; sequence IGTWLLYLPCTWSIGLAADPG. The Mitochondrial intermembrane portion of the chain corresponds to 105–108; that stretch reads CFPD. The chain crosses the membrane as a helical span at residues 109–129; sequence WYMLSLFGTGAILMRGAGCTI. The Mitochondrial matrix portion of the chain corresponds to 130-148; the sequence is NDMWDRDFDKKVTRTANRP. The chain crosses the membrane as a helical span at residues 149 to 169; it reads IAAGDISTFQSFVFLGGQLTL. At 170–172 the chain is on the mitochondrial intermembrane side; the sequence is ALG. The helical transmembrane segment at 173–193 threads the bilayer; that stretch reads VLLCLNYYSIAMGAASLLLVV. The Mitochondrial matrix segment spans residues 194 to 200; that stretch reads TYPLVKR. The chain crosses the membrane as a helical span at residues 201-221; that stretch reads ITFWPQLALGLTFNWGALLGW. Over 222 to 230 the chain is Mitochondrial intermembrane; the sequence is SAVKGSCDP. Residues 231–251 traverse the membrane as a helical segment; it reads AVCLPLYFSGVMWTLIYDTIY. Topologically, residues 252-277 are mitochondrial matrix; that stretch reads AHQDKKDDALIGLKSTALLFQENTRQ. The helical transmembrane segment at 278–298 threads the bilayer; that stretch reads WLSGFGVAMVAALSLAGANNG. At 299–332 the chain is on the mitochondrial intermembrane side; the sequence is QTVPYYAAVAAVGAHLAHQIYTVDIHRAEDCWDK. A helical membrane pass occupies residues 333–353; it reads FTSNRTVGMLLFLGIVLGNLC. Residues 354–374 are Mitochondrial matrix-facing; the sequence is KEKTEEAKDAEAVRVGSEQTS.

This sequence belongs to the UbiA prenyltransferase family. Requires Mg(2+) as cofactor.

It is found in the mitochondrion inner membrane. The catalysed reaction is an all-trans-polyprenyl diphosphate + 4-hydroxybenzoate = a 4-hydroxy-3-(all-trans-polyprenyl)benzoate + diphosphate. It carries out the reaction all-trans-decaprenyl diphosphate + 4-hydroxybenzoate = 4-hydroxy-3-(all-trans-decaprenyl)benzoate + diphosphate. It catalyses the reaction all-trans-nonaprenyl diphosphate + 4-hydroxybenzoate = 4-hydroxy-3-(all-trans-nonaprenyl)benzoate + diphosphate. It participates in cofactor biosynthesis; ubiquinone biosynthesis. Mediates the second step in the final reaction sequence of coenzyme Q (CoQ) biosynthesis. Catalyzes the prenylation of para-hydroxybenzoate (PHB) with an all-trans polyprenyl donor (such as all-trans-nonaprenyl diphosphate). The length of the polyprenyl side chain varies depending on the species, in humans, the side chain is comprised of 10 isoprenyls producing CoQ10 (also known as ubiquinone), whereas rodents predominantly generate CoQ9. However, this specificity is not complete, human tissues have low amounts of CoQ9 and rodent organs contain some CoQ10. Plays a central role in the biosynthesis of CoQ9. CoQ9 is a vital molecule that transports electrons from mitochondrial respiratory chain complexes. CoQs also function as cofactors for uncoupling protein and play a role as regulators of the extracellularly-induced ceramide-dependent apoptotic pathway. Regulates mitochondrial permeability transition pore (mPTP) opening and ROS production (pivotal events in cell death) in a tissue specific manner. This Mus musculus (Mouse) protein is 4-hydroxybenzoate polyprenyltransferase, mitochondrial.